The chain runs to 697 residues: Elongation factor G (697 aa).

The tr-type G domain maps to 8–290; sequence ERYRNIGIMA…AVLSYMPSPV (283 aa). GTP-binding positions include 17-24, 88-92, and 142-145; these read AHIDAGKT, DTPGH, and NKMD.

This sequence belongs to the TRAFAC class translation factor GTPase superfamily. Classic translation factor GTPase family. EF-G/EF-2 subfamily.

Its subcellular location is the cytoplasm. Its function is as follows. Catalyzes the GTP-dependent ribosomal translocation step during translation elongation. During this step, the ribosome changes from the pre-translocational (PRE) to the post-translocational (POST) state as the newly formed A-site-bound peptidyl-tRNA and P-site-bound deacylated tRNA move to the P and E sites, respectively. Catalyzes the coordinated movement of the two tRNA molecules, the mRNA and conformational changes in the ribosome. This Nitrosococcus oceani (strain ATCC 19707 / BCRC 17464 / JCM 30415 / NCIMB 11848 / C-107) protein is Elongation factor G.